A 623-amino-acid chain; its full sequence is Transketolase (623 aa).

N-acetylmethionine is present on M1. The residue at position 3 (S3) is a Phosphoserine. N6-acetyllysine is present on residues K6 and K11. H37 contacts substrate. Residues S40 and H77 each contribute to the thiamine diphosphate site. Residue S104 is modified to Phosphoserine. Position 123 to 125 (123 to 125) interacts with thiamine diphosphate; it reads GSL. K144 bears the N6-acetyllysine mark. D155 is a Mg(2+) binding site. Thiamine diphosphate contacts are provided by G156 and N185. Residues N185 and L187 each coordinate Mg(2+). N6-acetyllysine is present on residues K204, K232, and K241. Residues K244 and H258 each contribute to the thiamine diphosphate site. H258 provides a ligand contact to substrate. K260 is subject to N6-acetyllysine. At Y275 the chain carries Phosphotyrosine. At T287 the chain carries Phosphothreonine. The residue at position 295 (S295) is a Phosphoserine. Residues R318 and S345 each coordinate substrate. A Phosphoserine modification is found at S345. K352 is covalently cross-linked (Glycyl lysine isopeptide (Lys-Gly) (interchain with G-Cter in SUMO2)). E366 serves as the catalytic Proton donor. Position 392 (F392) interacts with thiamine diphosphate. Substrate is bound by residues H416 and D424. Thiamine diphosphate is bound at residue Q428. R474 is a substrate binding site. An N6-acetyllysine mark is found at K538 and K603.

This sequence belongs to the transketolase family. Homodimer. Mg(2+) serves as cofactor. The cofactor is Ca(2+). It depends on Mn(2+) as a cofactor. Co(2+) is required as a cofactor. Requires thiamine diphosphate as cofactor.

The catalysed reaction is D-sedoheptulose 7-phosphate + D-glyceraldehyde 3-phosphate = aldehydo-D-ribose 5-phosphate + D-xylulose 5-phosphate. Catalyzes the transfer of a two-carbon ketol group from a ketose donor to an aldose acceptor, via a covalent intermediate with the cofactor thiamine pyrophosphate. In Homo sapiens (Human), this protein is Transketolase (TKT).